A 233-amino-acid polypeptide reads, in one-letter code: 2-C-methyl-D-erythritol 4-phosphate cytidylyltransferase (233 aa).

It belongs to the IspD/TarI cytidylyltransferase family. IspD subfamily.

The enzyme catalyses 2-C-methyl-D-erythritol 4-phosphate + CTP + H(+) = 4-CDP-2-C-methyl-D-erythritol + diphosphate. It functions in the pathway isoprenoid biosynthesis; isopentenyl diphosphate biosynthesis via DXP pathway; isopentenyl diphosphate from 1-deoxy-D-xylulose 5-phosphate: step 2/6. Its function is as follows. Catalyzes the formation of 4-diphosphocytidyl-2-C-methyl-D-erythritol from CTP and 2-C-methyl-D-erythritol 4-phosphate (MEP). This chain is 2-C-methyl-D-erythritol 4-phosphate cytidylyltransferase, found in Vibrio atlanticus (strain LGP32) (Vibrio splendidus (strain Mel32)).